The primary structure comprises 472 residues: Sulfate adenylyltransferase subunit 1 (472 aa).

Positions 24 to 240 (KSLLRFLTCG…ENAEVGTRDL (217 aa)) constitute a tr-type G domain. The interval 33–40 (GSVDDGKS) is G1. A GTP-binding site is contributed by 33–40 (GSVDDGKS). The interval 91–95 (GITID) is G2. The segment at 112–115 (DTPG) is G3. Residues 112 to 116 (DTPGH) and 167 to 170 (NKMD) each bind GTP. The tract at residues 167–170 (NKMD) is G4. A G5 region spans residues 204–206 (SAL).

It belongs to the TRAFAC class translation factor GTPase superfamily. Classic translation factor GTPase family. CysN/NodQ subfamily. Heterodimer composed of CysD, the smaller subunit, and CysN.

The enzyme catalyses sulfate + ATP + H(+) = adenosine 5'-phosphosulfate + diphosphate. Its pathway is sulfur metabolism; hydrogen sulfide biosynthesis; sulfite from sulfate: step 1/3. In terms of biological role, with CysD forms the ATP sulfurylase (ATPS) that catalyzes the adenylation of sulfate producing adenosine 5'-phosphosulfate (APS) and diphosphate, the first enzymatic step in sulfur assimilation pathway. APS synthesis involves the formation of a high-energy phosphoric-sulfuric acid anhydride bond driven by GTP hydrolysis by CysN coupled to ATP hydrolysis by CysD. This chain is Sulfate adenylyltransferase subunit 1, found in Tolumonas auensis (strain DSM 9187 / NBRC 110442 / TA 4).